Here is a 191-residue protein sequence, read N- to C-terminus: Protein GrpE (191 aa).

Residues 1-10 (MNHEEQKVEA) are compositionally biased toward basic and acidic residues. Residues 1–28 (MNHEEQKVEAMEQVEAQPVEPTDVDSEV) form a disordered region.

It belongs to the GrpE family. As to quaternary structure, homodimer.

The protein resides in the cytoplasm. Its function is as follows. Participates actively in the response to hyperosmotic and heat shock by preventing the aggregation of stress-denatured proteins, in association with DnaK and GrpE. It is the nucleotide exchange factor for DnaK and may function as a thermosensor. Unfolded proteins bind initially to DnaJ; upon interaction with the DnaJ-bound protein, DnaK hydrolyzes its bound ATP, resulting in the formation of a stable complex. GrpE releases ADP from DnaK; ATP binding to DnaK triggers the release of the substrate protein, thus completing the reaction cycle. Several rounds of ATP-dependent interactions between DnaJ, DnaK and GrpE are required for fully efficient folding. The polypeptide is Protein GrpE (Aeromonas hydrophila subsp. hydrophila (strain ATCC 7966 / DSM 30187 / BCRC 13018 / CCUG 14551 / JCM 1027 / KCTC 2358 / NCIMB 9240 / NCTC 8049)).